A 100-amino-acid polypeptide reads, in one-letter code: MAKKSMIAREVKRKKLVKKYAAKRKSLLDEFNAAKDPMERLEIHRKIQGLPRNSAPNRVRNRCWATGKPRGVYRDFGLCRNQLRQRAHNGELPGLVKSSW.

Belongs to the universal ribosomal protein uS14 family. In terms of assembly, part of the 30S ribosomal subunit. Contacts proteins S3 and S10.

Its function is as follows. Binds 16S rRNA, required for the assembly of 30S particles and may also be responsible for determining the conformation of the 16S rRNA at the A site. The polypeptide is Small ribosomal subunit protein uS14 (Prochlorococcus marinus (strain MIT 9301)).